Consider the following 237-residue polypeptide: Probable Bax inhibitor 1 (237 aa).

Topologically, residues 1-29 (MNVFDRNINFDSLFKFSQISHSTQVHLKN) are cytoplasmic. Residues 30 to 50 (VYSSLAVCMFVAAAGSYVHVV) traverse the membrane as a helical segment. At 51 to 52 (TR) the chain is on the lumenal side. A helical membrane pass occupies residues 53-73 (LFQGGMLSVLGSLGMMFWLAM). The Cytoplasmic segment spans residues 74–86 (TPHNSETEKKRLA). Residues 87-107 (ILAGFAFLTGVGLCPTLDFVI) traverse the membrane as a helical segment. Over 108 to 112 (AINPS) the chain is Lumenal. The helical transmembrane segment at 113 to 133 (IIVTAFLGTSVIFVCFTLSAL) threads the bilayer. At 134 to 139 (YAKRRS) the chain is on the cytoplasmic side. Residues 140-160 (YLFLGGTLMSGLSILFLMSMM) form a helical membrane-spanning segment. Topologically, residues 161 to 166 (NMFFGS) are lumenal. A helical transmembrane segment spans residues 167–187 (VMLFKAHMYLGLLIMCGFVLX). The Cytoplasmic segment spans residues 188 to 206 (DTQLIIEKAENGDKDYVWH). Residues 207–227 (SVDLFLDFITIFRKLMVILAL) constitute an intramembrane region (helical). Residues 228–237 (NDKDKKKEKK) are Cytoplasmic-facing.

It belongs to the BI1 family. In terms of tissue distribution, highly abundant in testis.

It is found in the endoplasmic reticulum membrane. Its function is as follows. Suppressor of apoptosis. Modulates unfolded protein response signaling. Modulate ER calcium homeostasis by acting as a calcium-leak channel. This is Probable Bax inhibitor 1 (tmbim6) from Paralichthys olivaceus (Bastard halibut).